The following is a 272-amino-acid chain: HMP-PP phosphatase (272 aa).

D8 serves as the catalytic Nucleophile. Positions 8, 10, and 212 each coordinate Mg(2+).

Belongs to the HAD-like hydrolase superfamily. Cof family. The cofactor is Mg(2+).

It catalyses the reaction 4-amino-2-methyl-5-(diphosphooxymethyl)pyrimidine + H2O = 4-amino-2-methyl-5-(phosphooxymethyl)pyrimidine + phosphate + H(+). Its function is as follows. Catalyzes the hydrolysis of 4-amino-2-methyl-5-hydroxymethylpyrimidine pyrophosphate (HMP-PP) to 4-amino-2-methyl-5-hydroxymethylpyrimidine phosphate (HMP-P). The chain is HMP-PP phosphatase from Escherichia coli O8 (strain IAI1).